We begin with the raw amino-acid sequence, 115 residues long: uncharacterized protein (115 aa).

Residues 1–115 are disordered; sequence MGETWFLTPN…ARSPERTPSP (115 aa). A compositionally biased stretch (polar residues) spans 7-17; it reads LTPNGQSSPGS. Low complexity-rich tracts occupy residues 60–70 and 91–107; these read ASCAPRATPRR and SASA…WPAR.

This is an uncharacterized protein from Human adenovirus C serotype 2 (HAdV-2).